The sequence spans 41 residues: uncharacterized protein (41 aa).

The protein resides in the plastid. It localises to the chloroplast. This is an uncharacterized protein from Trieres chinensis (Marine centric diatom).